A 145-amino-acid polypeptide reads, in one-letter code: D-aminoacyl-tRNA deacylase (145 aa).

The short motif at 137–138 (GP) is the Gly-cisPro motif, important for rejection of L-amino acids element.

The protein belongs to the DTD family. As to quaternary structure, homodimer.

It is found in the cytoplasm. The catalysed reaction is glycyl-tRNA(Ala) + H2O = tRNA(Ala) + glycine + H(+). It catalyses the reaction a D-aminoacyl-tRNA + H2O = a tRNA + a D-alpha-amino acid + H(+). Functionally, an aminoacyl-tRNA editing enzyme that deacylates mischarged D-aminoacyl-tRNAs. Also deacylates mischarged glycyl-tRNA(Ala), protecting cells against glycine mischarging by AlaRS. Acts via tRNA-based rather than protein-based catalysis; rejects L-amino acids rather than detecting D-amino acids in the active site. By recycling D-aminoacyl-tRNA to D-amino acids and free tRNA molecules, this enzyme counteracts the toxicity associated with the formation of D-aminoacyl-tRNA entities in vivo and helps enforce protein L-homochirality. The polypeptide is D-aminoacyl-tRNA deacylase (Shigella dysenteriae serotype 1 (strain Sd197)).